The chain runs to 283 residues: 4-diphosphocytidyl-2-C-methyl-D-erythritol kinase (283 aa).

Lysine 13 is a catalytic residue. 96–106 (PMGGGIGGGSS) serves as a coordination point for ATP. Aspartate 138 is a catalytic residue.

Belongs to the GHMP kinase family. IspE subfamily.

The enzyme catalyses 4-CDP-2-C-methyl-D-erythritol + ATP = 4-CDP-2-C-methyl-D-erythritol 2-phosphate + ADP + H(+). Its pathway is isoprenoid biosynthesis; isopentenyl diphosphate biosynthesis via DXP pathway; isopentenyl diphosphate from 1-deoxy-D-xylulose 5-phosphate: step 3/6. Catalyzes the phosphorylation of the position 2 hydroxy group of 4-diphosphocytidyl-2C-methyl-D-erythritol. The polypeptide is 4-diphosphocytidyl-2-C-methyl-D-erythritol kinase (Pseudomonas fluorescens (strain SBW25)).